The primary structure comprises 1665 residues: Cortactin-binding protein 2 (1665 aa).

Residues Arg-120 to Lys-277 are a coiled coil. Disordered stretches follow at residues Glu-203–Thr-222, Val-368–Ser-480, and Arg-500–Asp-620. Polar residues-rich tracts occupy residues Ser-388–Thr-399 and Thr-410–Ser-429. Over residues Gln-455–Gln-469 the composition is skewed to low complexity. A compositionally biased stretch (polar residues) spans Ser-470–Ser-480. At Arg-500 the chain carries Asymmetric dimethylarginine. ANK repeat units lie at residues Gly-711 to Tyr-741, Asp-745 to Ala-774, Asn-778 to His-807, Gly-811 to Val-840, and Asp-844 to Gly-873. A disordered region spans residues Ser-875 to Val-902. The stretch at Glu-914–Arg-944 is one ANK 6 repeat. Positions Cys-1447–Asn-1495 are disordered. Ser-1526 is modified (phosphoserine). The interval Asn-1575 to Lys-1665 is disordered. Low complexity-rich tracts occupy residues Ser-1590 to Thr-1604 and Ser-1623 to Thr-1641. Residues Lys-1656–Lys-1665 are compositionally biased toward polar residues.

In terms of assembly, interacts with CTTN/cortactin SH3 domain. Interacts with STRN, STRN4/zinedin and MOB4/phocein; this interactions mediate the association with the STRIPAK core complex and may regulate dendritic spine distribution of the STRIPAK complex in hippocampal neurons. Activation of glutamate receptors weakens the interaction with STRN and STRN4.

Its subcellular location is the cytoplasm. It is found in the cell cortex. The protein localises to the cell projection. It localises to the dendritic spine. In terms of biological role, regulates the dendritic spine distribution of CTTN/cortactin in hippocampal neurons, and thus controls dendritic spinogenesis and dendritic spine maintenance. Associates with the striatin-interacting phosphatase and kinase (STRIPAK) core complex to regulate dendritic spine distribution of the STRIPAK complex in hippocampal neurons. The polypeptide is Cortactin-binding protein 2 (CTTNBP2) (Dasypus novemcinctus (Nine-banded armadillo)).